Here is a 203-residue protein sequence, read N- to C-terminus: Proline-rich protein 1 (203 aa).

The signal sequence occupies residues M1–G20.

Component of the acid-insoluble and acid-soluble organic matrix of calcified layers of the shell (at protein level).

It is found in the secreted. The polypeptide is Proline-rich protein 1 (Lottia gigantea (Giant owl limpet)).